The following is a 270-amino-acid chain: uncharacterized protein (270 aa).

The J domain occupies 43–112 (CTANDIKRKY…REEYDRFGIH (70 aa)). Positions 239-270 (EQSKQIPTQQKPSSLPPPERALPAPTMPTPSS) are disordered. The segment covering 242 to 251 (KQIPTQQKPS) has biased composition (polar residues). Over residues 252-270 (SLPPPERALPAPTMPTPSS) the composition is skewed to pro residues.

This is an uncharacterized protein from Schizosaccharomyces pombe (strain 972 / ATCC 24843) (Fission yeast).